Reading from the N-terminus, the 365-residue chain is Putative glutamate--cysteine ligase 2-3 (365 aa).

This sequence belongs to the glutamate--cysteine ligase type 2 family. YbdK subfamily.

It catalyses the reaction L-cysteine + L-glutamate + ATP = gamma-L-glutamyl-L-cysteine + ADP + phosphate + H(+). In terms of biological role, ATP-dependent carboxylate-amine ligase which exhibits weak glutamate--cysteine ligase activity. In Mycolicibacterium smegmatis (strain ATCC 700084 / mc(2)155) (Mycobacterium smegmatis), this protein is Putative glutamate--cysteine ligase 2-3.